A 346-amino-acid polypeptide reads, in one-letter code: Growth hormone-inducible transmembrane protein (346 aa).

The transit peptide at 1-45 (MLAARLVCLRTLPSRVFQPTFITKASPLVKNSITKNQWLLTPSRE) directs the protein to the mitochondrion. The Mitochondrial matrix portion of the chain corresponds to 46–83 (YATKTRIRTHRGKTGQELKEAALEPSLEKVFKIDQMGK). Residues 84 to 104 (WFVAGGAAVGLGALCYYGLGM) traverse the membrane as a helical segment. Residues 105–126 (SNEIGAIEKAVIWPQYVKDRIH) lie on the Mitochondrial intermembrane side of the membrane. Residues 127–147 (STYMYLAGSIGLTALSALALA) form a helical membrane-spanning segment. The Mitochondrial matrix portion of the chain corresponds to 148–160 (RSPALMNFMMTGS). A helical transmembrane segment spans residues 161 to 181 (WMTIGATFAAMIGAGMLVQSI). Residues 182–191 (SYEQSPGPKH) are Mitochondrial intermembrane-facing. A helical membrane pass occupies residues 192–212 (LAWMLHSGVMGAVVAPLTILG). The Mitochondrial matrix portion of the chain corresponds to 213–214 (GP). The chain crosses the membrane as a helical span at residues 215–235 (LLLRAAWYTAGIVGGLSTVAM). Topologically, residues 236–245 (CAPSEKFLNM) are mitochondrial intermembrane. A helical transmembrane segment spans residues 246 to 266 (GAPLGVGLGLVFASSLGSMFL). At 267-272 (PPTSVA) the chain is on the mitochondrial matrix side. The chain crosses the membrane as a helical span at residues 273–293 (GATLYSVAMYGGLVLFSMFLL). Residues 294–346 (YDTQKVVKRAEITPAYGAQKYDPINSMLTIYMDTLNIFMRVATMLATGSNRKK) lie on the Mitochondrial intermembrane side of the membrane.

Belongs to the BI1 family. As to quaternary structure, interacts with LETM1 and AFG3L2. Post-translationally, undergoes AFG3L2-mediated proteolytic degradation, upon hyperpolarization of mitochondria.

It is found in the mitochondrion inner membrane. In terms of biological role, plays an important role in maintenance of mitochondrial morphology and in mediating either calcium or potassium/proton antiport. Mediates proton-dependent calcium efflux from mitochondrion. Also functions as an electroneutral mitochondrial proton/potassium exchanger. Required for the mitochondrial tubular network and cristae organization. Involved in apoptotic release of cytochrome c. Inhibits AFG3L2 proteolytic activity, stimulating respiration and stabilizing respiratory enzymes in actively respiring mitochondria. However, when mitochondria become hyperpolarized, GHITM loses its inhibitory activity toward AFG3L2 and the now active AFG3L2 turns first on GHITM and, if hyperpolarization persists, on other proteins of the mitochondria, leading to a broad remodeling of the proteome. The protein is Growth hormone-inducible transmembrane protein (Ghitm) of Rattus norvegicus (Rat).